Reading from the N-terminus, the 227-residue chain is Response regulator protein TodT (227 aa).

The 115-residue stretch at 28 to 142 folds into the Response regulatory domain; that stretch reads VIYILDDDNA…ELLGAIRAAL (115 aa). 4-aspartylphosphate is present on D77. The 66-residue stretch at 158-223 folds into the HTH luxR-type domain; sequence LKENYESLSK…DLVRVTERLK (66 aa). Residues 182–201 constitute a DNA-binding region (H-T-H motif); sequence NKQTALELDISEATVKVHRH.

In terms of processing, phosphorylated by TodS.

Its subcellular location is the cytoplasm. Member of the two-component regulatory system TodS/TodT involved in the regulation of toluene degradation. Phosphorylated TodT activates transcription of the tod operon (todXFC1C2BADEGIH). Binds specifically to a 6-bp palindromic DNA structure in the tod promoter region. This is Response regulator protein TodT (todT) from Pseudomonas putida (strain ATCC 700007 / DSM 6899 / JCM 31910 / BCRC 17059 / LMG 24140 / F1).